The sequence spans 275 residues: MSSTPSNQNIIPLIKKESIVSLFEKGTRQDGRKLTDYRPLSITLDYAKKADGSALVKLGTTMVLAGTKLEIDKPYEDTPNQGNLIVNVELLPLAYETFEPGPPDENAIELARVVDRSLRDSKALDLTKLVIEPGKSVWTVWLDVYVLDYGGNVLDACTLASVAALHNTKVYKVEQDSNGFRVNKNEVVGKLPLNHPVVTVSIAKVDKYLIVDPDLDEESIMDTKVSFSYTPDLKIVGIQKSGKGSMSLQDIDQAENTARLVAVKLLEELKKQLGI.

It belongs to the RNase PH family. Rrp42 subfamily. Component of the archaeal exosome complex. Forms a hexameric ring-like arrangement composed of 3 Rrp41-Rrp42 heterodimers. The hexameric ring associates with a trimer of Rrp4 and/or Csl4 subunits.

The protein resides in the cytoplasm. Functionally, non-catalytic component of the exosome, which is a complex involved in RNA degradation. Contributes to the structuring of the Rrp41 active site. This is Exosome complex component Rrp42 from Saccharolobus islandicus (strain M.16.27) (Sulfolobus islandicus).